The following is a 961-amino-acid chain: Lon protease homolog, mitochondrial (961 aa).

Residues 1–67 (MAGGTGCVRL…SPAAAGHWRG (67 aa)) constitute a mitochondrion transit peptide. Disordered stretches follow at residues 76-103 (GGGAFSGGEDASEGGAEDGASGVGGSAG) and 220-262 (QLEV…VVVG). One can recognise a Lon N-terminal domain in the interval 125–371 (LPLIAVTRNP…KALSLLKKEF (247 aa)). The span at 235–244 (KLRKKPKRGK) shows a compositional bias: basic residues. A compositionally biased stretch (basic and acidic residues) spans 245-257 (KEAEEDGATKRPL). Residue 524–531 (GPPGVGKT) coordinates ATP. The Lon proteolytic domain occupies 760–951 (VTPPGVVMGL…REIFDIAFPE (192 aa)). The segment covering 784–801 (SLRRPRDRDSDKGDKDGS) has biased composition (basic and acidic residues). The disordered stretch occupies residues 784–803 (SLRRPRDRDSDKGDKDGSLE). Catalysis depends on residues serine 857 and lysine 900.

This sequence belongs to the peptidase S16 family. In terms of assembly, homohexamer. Organized in a ring with a central cavity. The ATP-binding and proteolytic domains (AP-domain) form a hexameric chamber, while the N-terminal domain is arranged as a trimer of dimers. DNA and RNA binding is stimulated by substrate and inhibited by ATP binding. Interacts with TWNK and mitochondrial DNA polymerase subunit POLG.

The protein resides in the mitochondrion matrix. It carries out the reaction Hydrolysis of proteins in presence of ATP.. In terms of biological role, ATP-dependent serine protease that mediates the selective degradation of misfolded, unassembled or oxidatively damaged polypeptides as well as certain short-lived regulatory proteins in the mitochondrial matrix. Endogenous substrates include mitochondrial steroidogenic acute regulatory (StAR) protein, DELE1, helicase Twinkle (TWNK) and the large ribosomal subunit protein MRPL32/bL32m. MRPL32/bL32m is protected from degradation by LONP1 when it is bound to a nucleic acid (RNA), but TWNK is not. May also have a chaperone function in the assembly of inner membrane protein complexes. Participates in the regulation of mitochondrial gene expression and in the maintenance of the integrity of the mitochondrial genome. Binds to mitochondrial promoters and RNA in a single-stranded, site-specific, and strand-specific manner. May regulate mitochondrial DNA replication and/or gene expression using site-specific, single-stranded DNA binding to target the degradation of regulatory proteins binding to adjacent sites in mitochondrial promoters. This Bos taurus (Bovine) protein is Lon protease homolog, mitochondrial.